The sequence spans 897 residues: Translation initiation factor IF-2 (897 aa).

The tr-type G domain occupies 402–570 (NRAPIVTIMG…SILVQSEILE (169 aa)). A G1 region spans residues 411 to 418 (GHVDHGKT). 411-418 (GHVDHGKT) provides a ligand contact to GTP. A G2 region spans residues 436-440 (GITQN). The G3 stretch occupies residues 458–461 (DTPG). Residues 458 to 462 (DTPGH) and 512 to 515 (NKID) each bind GTP. The segment at 512–515 (NKID) is G4. Residues 548–550 (SAV) form a G5 region.

Belongs to the TRAFAC class translation factor GTPase superfamily. Classic translation factor GTPase family. IF-2 subfamily.

The protein resides in the cytoplasm. Its function is as follows. One of the essential components for the initiation of protein synthesis. Protects formylmethionyl-tRNA from spontaneous hydrolysis and promotes its binding to the 30S ribosomal subunits. Also involved in the hydrolysis of GTP during the formation of the 70S ribosomal complex. This chain is Translation initiation factor IF-2, found in Blochmanniella floridana.